The sequence spans 439 residues: MTILRTMRNFSSMNIAASILLFVAAIAAAIIANSPVAPVYQEFLLHELHLQIGNFNLLSHGGENLRMIEFINDGLMTIFFLLVGLEIKRELLVGELSSFRKAALPFIAACGGMLFPVIVYMSICPPGSAGSQGLAIPMATDIAFSLGVLSLLGSRVPLSLKIFLTAFAVVDDIGGILVIALFYSSHVSYGYILIAALLYVLLYFIGKRGTTNKIFFLVIGVVIWYLFLQSGIHSTISGVILAFVIPAKPRLDVGKYIEHIRHTIAGFPVVESGSIVLTNEQIAKLKEVESASDRVISPLQSLEDNLHGAVNYLILPLFAFVNAGVVFSGGGELVGSVGMAVAAGLLFGKFAGIYFFTWLAIKIKLTPMPPGMTWKNLSGIALLGGIGFTVSLFIANLSFGANYPVLLNQAKFGVLSGTILSGLLGYIVLRIVLPVRKRK.

A run of 11 helical transmembrane segments spans residues 12–32 (SMNI…AIIA), 67–87 (MIEF…GLEI), 103–123 (ALPF…YMSI), 133–153 (GLAI…SLLG), 162–182 (IFLT…IALF), 186–206 (HVSY…YFIG), 214–234 (IFFL…GIHS), 314–334 (ILPL…GELV), 341–361 (VAAG…WLAI), 379–399 (GIAL…NLSF), and 412–432 (FGVL…LRIV).

This sequence belongs to the NhaA Na(+)/H(+) (TC 2.A.33) antiporter family.

It is found in the cell inner membrane. It carries out the reaction Na(+)(in) + 2 H(+)(out) = Na(+)(out) + 2 H(+)(in). In terms of biological role, na(+)/H(+) antiporter that extrudes sodium in exchange for external protons. The polypeptide is Na(+)/H(+) antiporter NhaA (Bacteroides thetaiotaomicron (strain ATCC 29148 / DSM 2079 / JCM 5827 / CCUG 10774 / NCTC 10582 / VPI-5482 / E50)).